The chain runs to 726 residues: Methionine--tRNA ligase (726 aa).

The 'HIGH' region motif lies at 12–22 (PYVNNIPHLGN). Zn(2+)-binding residues include C143, C146, C155, and C158. Positions 330-334 (KFSKS) match the 'KMSKS' region motif. K333 contributes to the ATP binding site. Residues 562 to 667 (FSEQICLKTV…DNPIPGERVI (106 aa)) enclose the tRNA-binding domain.

The protein belongs to the class-I aminoacyl-tRNA synthetase family. MetG type 1 subfamily. In terms of assembly, homodimer. Requires Zn(2+) as cofactor.

It localises to the cytoplasm. It catalyses the reaction tRNA(Met) + L-methionine + ATP = L-methionyl-tRNA(Met) + AMP + diphosphate. Its function is as follows. Is required not only for elongation of protein synthesis but also for the initiation of all mRNA translation through initiator tRNA(fMet) aminoacylation. The polypeptide is Methionine--tRNA ligase (Borrelia recurrentis (strain A1)).